A 421-amino-acid polypeptide reads, in one-letter code: Lipid II:glycine glycyltransferase (421 aa).

This sequence belongs to the FemABX family. In terms of assembly, monomer.

Its subcellular location is the cytoplasm. It catalyses the reaction beta-D-GlcNAc-(1-&gt;4)-Mur2Ac(oyl-L-Ala-D-isoglutaminyl-L-Lys-D-Ala-D-Ala)-di-trans,octa-cis-undecaprenyl diphosphate + glycyl-tRNA(Gly) = beta-D-GlcNAc-(1-&gt;4)-Mur2Ac(oyl-L-Ala-D-isoglutaminyl-L-Lys-(N(6)-Gly)-D-Ala-D-Ala)-di-trans,octa-cis-undecaprenyl diphosphate + tRNA(Gly) + H(+). Catalyzes the incorporation of the first glycine of the pentaglycine interpeptide bridge, which is characteristic of the S.aureus peptidoglycan. This glycine is added to the epsilon-amino group of the L-lysine of the membrane-bound lipid II intermediate (GlcNAc-(beta-1,4)-N-acetylmuramic acid(-L-Ala-D-iGln-L-Lys-D-Ala-D-Ala)-pyrophosphoryl-undecaprenol), using glycyl-tRNA(Gly) as donor, in a ribosome-independent mechanism. The chain is Lipid II:glycine glycyltransferase (femX) from Staphylococcus aureus (strain bovine RF122 / ET3-1).